Consider the following 357-residue polypeptide: UDP-N-acetylglucosamine--N-acetylmuramyl-(pentapeptide) pyrophosphoryl-undecaprenol N-acetylglucosamine transferase (357 aa).

Residues 12–14, asparagine 124, arginine 162, serine 190, isoleucine 244, 263–268, and glutamine 289 each bind UDP-N-acetyl-alpha-D-glucosamine; these read TGG and ALTVAE.

The protein belongs to the glycosyltransferase 28 family. MurG subfamily.

The protein localises to the cell inner membrane. It catalyses the reaction di-trans,octa-cis-undecaprenyl diphospho-N-acetyl-alpha-D-muramoyl-L-alanyl-D-glutamyl-meso-2,6-diaminopimeloyl-D-alanyl-D-alanine + UDP-N-acetyl-alpha-D-glucosamine = di-trans,octa-cis-undecaprenyl diphospho-[N-acetyl-alpha-D-glucosaminyl-(1-&gt;4)]-N-acetyl-alpha-D-muramoyl-L-alanyl-D-glutamyl-meso-2,6-diaminopimeloyl-D-alanyl-D-alanine + UDP + H(+). Its pathway is cell wall biogenesis; peptidoglycan biosynthesis. In terms of biological role, cell wall formation. Catalyzes the transfer of a GlcNAc subunit on undecaprenyl-pyrophosphoryl-MurNAc-pentapeptide (lipid intermediate I) to form undecaprenyl-pyrophosphoryl-MurNAc-(pentapeptide)GlcNAc (lipid intermediate II). The protein is UDP-N-acetylglucosamine--N-acetylmuramyl-(pentapeptide) pyrophosphoryl-undecaprenol N-acetylglucosamine transferase of Alkalilimnicola ehrlichii (strain ATCC BAA-1101 / DSM 17681 / MLHE-1).